A 363-amino-acid polypeptide reads, in one-letter code: MASAVVSMVPTTASRFALLQVDSSSDSDSEKARGAHATGKARSGSAAKGKSKGNEKKKEKRRKKKEQQQSEANELRNLAFKKIPSKPSQGIGGALQEHSTHNVPKEYQEDDWQQWQQRDEQLTSDMFEADLEKALMLSKLEYEESKDNGNEVNGVPQSKKVNKKDKRRNNQGKDKPLTVPLKDFQLEDQQAKKQEELKSPAMPQDRGFFNKLEEDVTKIILKEKRKEHSSDVTESFSTPDYSMEPALKDGKTEVLKQEIEKKEAELKQMKSIISQWEAKYREVKARNSQLLKMLQEGEMKDKAEILLQVDELLSIKNELTLQVTTLHAALEQERSKVKVLQAEQVKYQGGKKSKKNPESEHGR.

Disordered stretches follow at residues 22–124 and 143–185; these read DSSS…QLTS and EESK…KDFQ. Positions 54–79 form a coiled coil; it reads NEKKKEKRRKKKEQQQSEANELRNLA. Over residues 98–107 the composition is skewed to basic and acidic residues; it reads HSTHNVPKEY. Residues 160 to 170 show a composition bias toward basic residues; that stretch reads KVNKKDKRRNN. Coiled-coil stretches lie at residues 247 to 298 and 328 to 348; these read LKDG…QEGE and AALE…VKYQ.

The protein belongs to the GKAP1 family.

The protein resides in the golgi apparatus. Functionally, may play a role in the regulation of insulin-dependent IRS1 tyrosine phosphorylation in adipocytes. The sequence is that of G kinase-anchoring protein 1 (gkap1) from Xenopus tropicalis (Western clawed frog).